Consider the following 157-residue polypeptide: MRKYLIILVLLLFLSSSFGYYFDYIKVSESNPIKTITFKINKAENYSYKLSFVHYGNINKSMKVNIYLNGNLAYTIDDSNDASPAYKKNASIDITNYLKDGENVLKVEGMNLIGNENYHPYYVLKDIYINEPAKTPIDFKLMIYALLIICFLIYKKC.

The signal sequence occupies residues 1 to 19; the sequence is MRKYLIILVLLLFLSSSFG.

This is an uncharacterized protein from Methanocaldococcus jannaschii (strain ATCC 43067 / DSM 2661 / JAL-1 / JCM 10045 / NBRC 100440) (Methanococcus jannaschii).